An 84-amino-acid chain; its full sequence is Cell division topological specificity factor (84 aa).

Belongs to the MinE family.

In terms of biological role, prevents the cell division inhibition by proteins MinC and MinD at internal division sites while permitting inhibition at polar sites. This ensures cell division at the proper site by restricting the formation of a division septum at the midpoint of the long axis of the cell. This chain is Cell division topological specificity factor, found in Granulibacter bethesdensis (strain ATCC BAA-1260 / CGDNIH1).